A 676-amino-acid polypeptide reads, in one-letter code: Protein TAPT1 homolog (676 aa).

The interval 1–44 (MNATLNSAGGKRQLRFRGDVTGSRVEELHHQQQEEQKQKAPLAQ) is disordered. The segment covering 24–38 (RVEELHHQQQEEQKQ) has biased composition (basic and acidic residues). Helical transmembrane passes span 128-148 (SFLY…WALV), 170-190 (EICD…MLLV), 249-269 (VLTH…LIMF), 346-366 (FCVM…IDWV), 414-434 (GFIP…AVSF), and 437-457 (LAAW…RICL). The tract at residues 625-676 (SGDGVTSAKAKKATQRLPKRTHKRSESEPGMPSMVEKGGAAGIAGGNQTTQL) is disordered. The span at 633–647 (KAKKATQRLPKRTHK) shows a compositional bias: basic residues.

Belongs to the TAPT1 family.

It is found in the membrane. The sequence is that of Protein TAPT1 homolog from Drosophila melanogaster (Fruit fly).